The primary structure comprises 1260 residues: Kinesin-like protein KIN-14E (1260 aa).

Positions 115 to 274 (FQKDPIPTSL…PGREEIEALL (160 aa)) constitute a MyTH4 domain. Residues 279 to 593 (LTTIVFFLDE…HINDVMLRRY (315 aa)) form the FERM domain. 2 coiled-coil regions span residues 615–676 (QNFE…LLEV) and 753–853 (SKRL…TAAI). Residues 888–1209 (KIRVYCRIRP…LLYASRVRTI (322 aa)) enclose the Kinesin motor domain. 972-977 (GSGKTF) provides a ligand contact to ATP. Residues 1217 to 1239 (ISSKEMVRLKKLVAYWKEQAGKK) form a calmodulin-binding region. Residues 1221-1260 (EMVRLKKLVAYWKEQAGKKGEEEDLVDIEEDRTRKDEADS) form a homodimerization domain region. The segment at 1236 to 1260 (AGKKGEEEDLVDIEEDRTRKDEADS) is disordered. Basic and acidic residues predominate over residues 1251–1260 (DRTRKDEADS).

This sequence belongs to the TRAFAC class myosin-kinesin ATPase superfamily. Kinesin family. KIN-14 subfamily. In terms of assembly, homodimer (via C-terminus). Binds microtubules via its N-terminus containing the MyTH4 domain and binds F-actin via its FERM domain. Interacts with KIPK1. Interacts with KIPK2. Interacts with AN. Interacts with AIR9. Interacts (via C-terminus) with KIC, CAM2, CAM4 and CAM6. KIC and calmodulin show competitive binding to KCBP. Binding to calmodulin inhibits microtubule binding activity. Binding to KIC inhibits microtubule binding activity and microtubule-stimulated ATPase activity. In terms of tissue distribution, widely expressed with the highest levels in flowers. Strongly expressed in the root tip. Highly detected in the branch apex of the trichome.

It is found in the cytoplasm. The protein localises to the cell cortex. It localises to the cytoskeleton. Its subcellular location is the spindle. The protein resides in the phragmoplast. Functionally, minus-end microtubule-dependent motor protein involved in the regulation of cell division and trichome morphogenesis through microtubules bundling. Possesses basal and microtubule-stimulated ATPase activities. Acts as a hub that brings together microtubules and actin filaments to modulate the cytoskeleton during trichome formation and morphogenesis. Could be involved in the negative regulation of root growth. The sequence is that of Kinesin-like protein KIN-14E from Arabidopsis thaliana (Mouse-ear cress).